Consider the following 151-residue polypeptide: Small ribosomal subunit protein uS15 (151 aa).

The protein belongs to the universal ribosomal protein uS15 family.

The protein is Small ribosomal subunit protein uS15 (RPS13) of Pisum sativum (Garden pea).